Consider the following 532-residue polypeptide: Neutral amino acid transporter A (532 aa).

M1 carries the post-translational modification N-acetylmethionine. The segment covering 1–10 has biased composition (polar residues); that stretch reads MEKSNETNGY. The tract at residues 1-25 is disordered; that stretch reads MEKSNETNGYLDSAQAGPAAGPGAP. Residues 1–41 lie on the Cytoplasmic side of the membrane; that stretch reads MEKSNETNGYLDSAQAGPAAGPGAPGTAAGRARRCAGFLRR. Residues 14 to 25 show a composition bias toward low complexity; it reads AQAGPAAGPGAP. 3 helical membrane passes run 42-62, 88-108, and 119-139; these read QALV…GAAL, MIIL…LDAS, and AYFG…AFII. Topologically, residues 140–216 are extracellular; the sequence is KPGSGAQTLQ…VTHEKIPIGT (77 aa). N-linked (GlcNAc...) asparagine glycosylation is found at N201 and N206. 6 helical membrane passes run 217 to 237, 257 to 277, 298 to 318, 328 to 348, 373 to 393, and 418 to 438; these read EIEG…GVAL, ATMV…MFLV, IFAS…LIYF, FLLG…SSAT, IGAT…AVFI, and VGAA…LEAI. The segment at 500-532 is disordered; it reads CKSEEETSPLVTHQNPAGPVASAPELESKESVL. Phosphoserine is present on residues S507, S527, and S530.

Belongs to the dicarboxylate/amino acid:cation symporter (DAACS) (TC 2.A.23) family. SLC1A4 subfamily. Expressed mostly in brain, muscle, and pancreas but detected in all tissues examined.

It is found in the membrane. It localises to the melanosome. The enzyme catalyses L-threonine(in) + Na(+)(in) = L-threonine(out) + Na(+)(out). It catalyses the reaction L-serine(in) + Na(+)(in) = L-serine(out) + Na(+)(out). The catalysed reaction is L-cysteine(in) + Na(+)(in) = L-cysteine(out) + Na(+)(out). It carries out the reaction L-alanine(in) + Na(+)(in) = L-alanine(out) + Na(+)(out). The enzyme catalyses L-proline(in) + Na(+)(in) = L-proline(out) + Na(+)(out). It catalyses the reaction 4-hydroxy-L-proline(in) + Na(+)(in) = 4-hydroxy-L-proline(out) + Na(+)(out). In terms of biological role, sodium-dependent neutral amino-acid transporter that mediates transport of alanine, serine, cysteine, proline, hydroxyproline and threonine. This is Neutral amino acid transporter A from Homo sapiens (Human).